A 108-amino-acid chain; its full sequence is Thioredoxin (108 aa).

The Thioredoxin domain maps to G2–G108. A disulfide bridge connects residues C32 and C35.

Belongs to the thioredoxin family.

In terms of biological role, participates in various redox reactions through the reversible oxidation of its active center dithiol to a disulfide and catalyzes dithiol-disulfide exchange reactions. The chain is Thioredoxin (trxA) from Chlorobaculum thiosulfatiphilum (Chlorobium limicola f.sp. thiosulfatophilum).